The primary structure comprises 202 residues: GTP cyclohydrolase-2 (202 aa).

Arg-48–Glu-52 lines the GTP pocket. 3 residues coordinate Zn(2+): Cys-53, Cys-64, and Cys-66. Residues Gln-69, Glu-91 to Arg-93, and Thr-113 each bind GTP. Asp-125 functions as the Proton acceptor in the catalytic mechanism. Arg-127 acts as the Nucleophile in catalysis. 2 residues coordinate GTP: Thr-148 and Lys-153.

The protein belongs to the GTP cyclohydrolase II family. It depends on Zn(2+) as a cofactor.

The enzyme catalyses GTP + 4 H2O = 2,5-diamino-6-hydroxy-4-(5-phosphoribosylamino)-pyrimidine + formate + 2 phosphate + 3 H(+). The protein operates within cofactor biosynthesis; riboflavin biosynthesis; 5-amino-6-(D-ribitylamino)uracil from GTP: step 1/4. In terms of biological role, catalyzes the conversion of GTP to 2,5-diamino-6-ribosylamino-4(3H)-pyrimidinone 5'-phosphate (DARP), formate and pyrophosphate. In Colwellia psychrerythraea (strain 34H / ATCC BAA-681) (Vibrio psychroerythus), this protein is GTP cyclohydrolase-2.